A 246-amino-acid chain; its full sequence is Homeobox protein Crxos (246 aa).

2 DNA-binding regions (homeobox) span residues 22–72 and 129–182; these read WEQL…EMRP and ELTD…RGYR. The short motif at 163-177 is the Nuclear localization signal element; that stretch reads RKDLIRSWFITQRHR.

The protein belongs to the paired homeobox family. In terms of tissue distribution, specifically expressed during the preimplantation stages of embryonic development, between the four-cell to eight-cell stage and the morula stage. Expressed in adult testis. As to expression, detected in early embryos; expression decreases gradually with embryonic development. Also expressed in extraembryonic tissues after E14.5, expression level increases drastically until E18.5, immediately before partum.

The protein localises to the nucleus. Functionally, transcription factor that acts as a regulator of embryonic stem cell differentiation during the preimplantation stages of embryonic development. In terms of biological role, transcription factor that acts as a positive regulator of embryonic stem cell differentiation. Its function is as follows. Transcription factor that promotes embryonic stem cell pluripotency. Transcription factor that promotes embryonic stem cell pluripotency. Also involved in extraembryonic tissues development by promoting the expression of placental prolactin family genes. This is Homeobox protein Crxos from Mus musculus (Mouse).